Reading from the N-terminus, the 234-residue chain is Proteasome subunit alpha type-2 (234 aa).

Residue Ala-2 is modified to N-acetylalanine. Residue Tyr-6 is modified to Phosphotyrosine. Residues Ser-7, Ser-14, and Ser-16 each carry the phosphoserine modification. Tyr-24 is modified (phosphotyrosine). Residue Lys-70 is modified to N6-acetyllysine. Phosphotyrosine occurs at positions 76 and 121. At Lys-171 the chain carries N6-acetyllysine.

Belongs to the peptidase T1A family. As to quaternary structure, the 26S proteasome consists of a 20S proteasome core and two 19S regulatory subunits. The 20S proteasome core is a barrel-shaped complex made of 28 subunits that are arranged in four stacked rings. The two outer rings are each formed by seven alpha subunits, and the two inner rings are formed by seven beta subunits. The proteolytic activity is exerted by three beta-subunits PSMB5, PSMB6 and PSMB7. Phosphorylated on tyrosine residues; which may be important for nuclear import. As to expression, detected in liver (at protein level).

It is found in the cytoplasm. The protein resides in the nucleus. Functionally, component of the 20S core proteasome complex involved in the proteolytic degradation of most intracellular proteins. This complex plays numerous essential roles within the cell by associating with different regulatory particles. Associated with two 19S regulatory particles, forms the 26S proteasome and thus participates in the ATP-dependent degradation of ubiquitinated proteins. The 26S proteasome plays a key role in the maintenance of protein homeostasis by removing misfolded or damaged proteins that could impair cellular functions, and by removing proteins whose functions are no longer required. Associated with the PA200 or PA28, the 20S proteasome mediates ubiquitin-independent protein degradation. This type of proteolysis is required in several pathways including spermatogenesis (20S-PA200 complex) or generation of a subset of MHC class I-presented antigenic peptides (20S-PA28 complex). The chain is Proteasome subunit alpha type-2 (Psma2) from Mus musculus (Mouse).